The chain runs to 92 residues: Acylphosphatase (92 aa).

In terms of domain architecture, Acylphosphatase-like spans 5-90 (TWRLVAHGRV…GEFAGFEFRP (86 aa)). Residues R20 and N38 contribute to the active site.

The protein belongs to the acylphosphatase family.

It carries out the reaction an acyl phosphate + H2O = a carboxylate + phosphate + H(+). The chain is Acylphosphatase (acyP) from Cupriavidus necator (strain ATCC 17699 / DSM 428 / KCTC 22496 / NCIMB 10442 / H16 / Stanier 337) (Ralstonia eutropha).